The chain runs to 192 residues: Iodate reductase subunit IdrB (192 aa).

Residues 1 to 52 constitute a signal peptide (tat-type signal); it reads MSENIIPVRAVPAHDHEHDGERACMSRRRFLLFGGTSVALLSIASLPGVAQV. In terms of domain architecture, Rieske spans 102–173; the sequence is GADKDIVAFN…LEVQGDDIYA (72 aa). [2Fe-2S] cluster contacts are provided by C114, H116, C135, and H138.

This sequence belongs to the AOX family. In terms of assembly, the iodate reductase (Idr) complex is composed of a molybdopterin-dependent iodate reductase (IdrA and IdrB subunits) and two associated peroxidases (IdrP1 and IdrP2). It depends on [2Fe-2S] cluster as a cofactor. Predicted to be exported by the Tat system. The position of the signal peptide cleavage has not been experimentally proven.

The protein resides in the periplasm. Its function is as follows. Involved in iodate respiration. Probably catalyzes the reduction of iodate (IO(3)(-)) to hypoiodous acid (HIO) and H(2)O(2), using a reduced cytochrome c as the electron donor. This is Iodate reductase subunit IdrB from Pseudomonas sp. (strain SCT).